The primary structure comprises 208 residues: Uracil phosphoribosyltransferase (208 aa).

Residues Arg-78, Arg-103, and 130–138 (DPMLATGGT) each bind 5-phospho-alpha-D-ribose 1-diphosphate. Residues Ile-193 and 198-200 (GDA) contribute to the uracil site. Position 199 (Asp-199) interacts with 5-phospho-alpha-D-ribose 1-diphosphate.

This sequence belongs to the UPRTase family. Mg(2+) is required as a cofactor.

It carries out the reaction UMP + diphosphate = 5-phospho-alpha-D-ribose 1-diphosphate + uracil. Its pathway is pyrimidine metabolism; UMP biosynthesis via salvage pathway; UMP from uracil: step 1/1. With respect to regulation, allosterically activated by GTP. Functionally, catalyzes the conversion of uracil and 5-phospho-alpha-D-ribose 1-diphosphate (PRPP) to UMP and diphosphate. The chain is Uracil phosphoribosyltransferase from Nitratidesulfovibrio vulgaris (strain ATCC 29579 / DSM 644 / CCUG 34227 / NCIMB 8303 / VKM B-1760 / Hildenborough) (Desulfovibrio vulgaris).